Here is a 219-residue protein sequence, read N- to C-terminus: Translation initiation factor IF-3 (219 aa).

The protein belongs to the IF-3 family. Monomer.

The protein localises to the cytoplasm. In terms of biological role, IF-3 binds to the 30S ribosomal subunit and shifts the equilibrium between 70S ribosomes and their 50S and 30S subunits in favor of the free subunits, thus enhancing the availability of 30S subunits on which protein synthesis initiation begins. The polypeptide is Translation initiation factor IF-3 (Prochlorococcus marinus (strain MIT 9303)).